The sequence spans 269 residues: Tryptophan synthase alpha chain (269 aa).

Active-site proton acceptor residues include E49 and D60.

This sequence belongs to the TrpA family. As to quaternary structure, tetramer of two alpha and two beta chains.

The catalysed reaction is (1S,2R)-1-C-(indol-3-yl)glycerol 3-phosphate + L-serine = D-glyceraldehyde 3-phosphate + L-tryptophan + H2O. The protein operates within amino-acid biosynthesis; L-tryptophan biosynthesis; L-tryptophan from chorismate: step 5/5. Its function is as follows. The alpha subunit is responsible for the aldol cleavage of indoleglycerol phosphate to indole and glyceraldehyde 3-phosphate. In Klebsiella aerogenes (Enterobacter aerogenes), this protein is Tryptophan synthase alpha chain.